The sequence spans 471 residues: tRNA(Ile)-lysidine synthase (471 aa).

27–32 (SGGPDS) is an ATP binding site.

The protein belongs to the tRNA(Ile)-lysidine synthase family.

It localises to the cytoplasm. It catalyses the reaction cytidine(34) in tRNA(Ile2) + L-lysine + ATP = lysidine(34) in tRNA(Ile2) + AMP + diphosphate + H(+). Functionally, ligates lysine onto the cytidine present at position 34 of the AUA codon-specific tRNA(Ile) that contains the anticodon CAU, in an ATP-dependent manner. Cytidine is converted to lysidine, thus changing the amino acid specificity of the tRNA from methionine to isoleucine. The sequence is that of tRNA(Ile)-lysidine synthase from Dehalococcoides mccartyi (strain CBDB1).